The sequence spans 257 residues: MMKQEQMTVVRHKPIAKNIYELMLSGHLVEEMNAPGQFVHVKVTSQADPLLRRPLSLCRIDQNARECTLIYRKEGIGTTLLSEKRPGETIDVLGPLGNGFPLDAAQTGRRALLVGGGIGVPPLYELAKQLVKKGVIVTSVLGFQTKEVVFYEREFAEFGETYIATVDGSHGTKGFVTDVIHERAISFDVLYACGPKPMLKALEQMFPDKEVYLSLEERMGCGIGACFACVCRVPNSETAYKKVCCDGPVFKAGEVVL.

One can recognise an FAD-binding FR-type domain in the interval 2–102 (MKQEQMTVVR…LGPLGNGFPL (101 aa)). Residues 53–56 (RPLS), 70–72 (IYR), and 77–78 (GT) each bind FAD. Positions 221, 226, 229, and 244 each coordinate [2Fe-2S] cluster.

The protein belongs to the PyrK family. In terms of assembly, heterotetramer of 2 PyrK and 2 PyrD type B subunits. It depends on [2Fe-2S] cluster as a cofactor. FAD serves as cofactor.

The protein operates within pyrimidine metabolism; UMP biosynthesis via de novo pathway; orotate from (S)-dihydroorotate (NAD(+) route): step 1/1. Responsible for channeling the electrons from the oxidation of dihydroorotate from the FMN redox center in the PyrD type B subunit to the ultimate electron acceptor NAD(+). The sequence is that of Dihydroorotate dehydrogenase B (NAD(+)), electron transfer subunit from Geobacillus sp. (strain WCH70).